The sequence spans 312 residues: Iron/alpha-ketoglutarate-dependent dioxygenase penM (312 aa).

Residues histidine 134, aspartate 136, and histidine 211 each contribute to the Fe cation site. The tract at residues 287-312 is disordered; that stretch reads LGLKSEQPLPDGMEKGSMQETDIGGQ.

It belongs to the PhyH family. As to quaternary structure, homodimer. The cofactor is Fe cation.

It catalyses the reaction (-)-cyclopeptine + 2-oxoglutarate + O2 = (Z)-dehydrocyclopeptine + succinate + CO2 + H2O. The catalysed reaction is (Z)-dehydrocyclopeptine + 2-oxoglutarate + O2 = (-)-cyclopenine + succinate + CO2. The enzyme catalyses (-)-4'-methoxycyclopeptine + 2-oxoglutarate + O2 = (Z)-4'-methoxydehydrocyclopeptine + succinate + CO2 + H2O. It carries out the reaction (Z)-4'-methoxydehydrocyclopeptine + 2-oxoglutarate + O2 = (-)-4'-methoxycyclopenine + succinate + CO2. Its pathway is secondary metabolite biosynthesis. It participates in alkaloid biosynthesis. The protein operates within mycotoxin biosynthesis. Iron/alpha-ketoglutarate-dependent dioxygenase; part of the gene cluster that mediates the biosynthesis of penigequinolones, potent insecticidal alkaloids that contain a highly modified 10-carbon prenyl group. The first stage is catalyzed by the nonribosomal peptide synthetase penN that condenses anthranilic acid and O-methyl-L-tyrosine to produce 4'-methoxycyclopeptin. 4'-methoxycyclopeptin is then converted to 4'-methoxydehydrocyclopeptin by the ketoglutarate-dependent dioxygenase penM through dehydrogenation to form a double bond between C-alpha and C-beta of the O-methyltyrosine side chain. PenM also converts its first product methoxydehydrocyclopeptin to 4'-methoxycyclopenin. The following conversion of 4'methoxycyclopenin into 4'-methoxyviridicatin is catalyzed by the cyclopenase penL. 4'-methoxyviridicatin is the precursor of quinolone natural products, and is further converted to quinolinone B. The prenyltransferase penI then catalyzes the canonical Friedel-Crafts alkylation of quinolinone B with dimethylallyl cation to yield dimethylallyl quinolone, which is subjected to FAD-dependent dehydrogenation by the FAD-linked oxidoreductase penH to yield conjugated aryl diene. The delta(3') double bond then serves as the site of the second alkylation with DMAPP catalyzed by the prenyltransferase penG to yield a carbenium ion intermediate, which can be attacked by H(2)O to yield a styrenyl quinolone containing a C3'-hydroxyprenyl chain, or undergo cyclization to yield yaequinolones J1 and J2. The conversion of the styrenyl quinolone into the tetrahydrofuran-containing yaequinolone C is performed by the FAD-dependent monooxygenase penE and involves epoxidation of the terminal C7'-C8' olefin, followed by epoxide ring opening initiated by the C3' hydroxyl group. The predicted cysteine hydrolase penJ acts as an epoxide hydrolase that enhances the rate of the 5-exo-tet cyclization step, increasing the yield of yaequinolone C. PenF catalyzes the cationic rearrangement of the epoxide formed by penE (before ring opening to produce yaequinolone C) into yaequinolone D. Finally, the short-chain dehydrogenase/reductase (SDR)-like reductase penD, catalyzes both the dehydration of yaequinolone D and the reduction of the resulting oxonium to yield penigequinolone. This Penicillium thymicola protein is Iron/alpha-ketoglutarate-dependent dioxygenase penM.